We begin with the raw amino-acid sequence, 358 residues long: Fructose-bisphosphate aldolase 6, cytosolic (358 aa).

Residue Ser-2 is modified to N-acetylserine. Arg-39 provides a ligand contact to substrate. Cys-68 carries the S-glutathionyl cysteine; transient modification. Cys-173 carries the S-glutathionyl cysteine; transient; alternate modification. Cys-173 is modified (S-nitrosocysteine; transient; alternate). Glu-183 serves as the catalytic Proton acceptor. Lys-225 serves as the catalytic Schiff-base intermediate with dihydroxyacetone-P. Substrate-binding positions include 266 to 268 (SGG) and Arg-298. Ser-350 carries the post-translational modification Phosphoserine. At Lys-354 the chain carries N6,N6,N6-trimethyllysine.

Belongs to the class I fructose-bisphosphate aldolase family. Homotetramer. Interacts with TRX1 and TRX3. Interacts with GAPC1 and VDAC3. In terms of processing, S-glutathionylated at Cys-68 and Cys-173. Post-translationally, S-nitrosylated at Cys-173. In terms of tissue distribution, expressed in roots, rosettes leaves, cauline leaves, stems and flowers.

It is found in the cytoplasm. It localises to the cytosol. The protein localises to the nucleus. The protein resides in the mitochondrion. The enzyme catalyses beta-D-fructose 1,6-bisphosphate = D-glyceraldehyde 3-phosphate + dihydroxyacetone phosphate. It functions in the pathway carbohydrate degradation; glycolysis; D-glyceraldehyde 3-phosphate and glycerone phosphate from D-glucose: step 4/4. Its activity is regulated as follows. Total and irreversible inhibition by S-nitrosoglutathione (GSNO). Partial and reversible inhibition by oxidized glutathione (GSSG). In terms of biological role, fructose-bisphosphate aldolase that plays a key role in glycolysis and gluconeogenesis. Associates with GAPC1 to the outer mitochondrial membrane, in a redox-dependent manner, leading to binding and bundling of actin. Actin binding and bundling occurs under oxidizing conditions and is reversible under reducing conditions. May be part of a redox-dependent retrograde signal transduction network for adaptation upon oxidative stress. The sequence is that of Fructose-bisphosphate aldolase 6, cytosolic from Arabidopsis thaliana (Mouse-ear cress).